The primary structure comprises 782 residues: LPS-assembly protein LptD (782 aa).

The N-terminal stretch at 1 to 24 (MKKNSYTRLSIAILSTLYSVSSLA) is a signal peptide.

It belongs to the LptD family. Component of the lipopolysaccharide transport and assembly complex. Interacts with LptE and LptA.

The protein localises to the cell outer membrane. Together with LptE, is involved in the assembly of lipopolysaccharide (LPS) at the surface of the outer membrane. The chain is LPS-assembly protein LptD from Pasteurella multocida (strain Pm70).